Reading from the N-terminus, the 35-residue chain is Cupiennin-1b (35 aa).

Position 35 is a glutamic acid 1-amide (Glu-35).

This sequence belongs to the cationic peptide 04 (cupiennin) family. 01 subfamily. In terms of tissue distribution, expressed by the venom gland.

It is found in the secreted. Its function is as follows. Has antimicrobial activity against E.coli, E.faecalis, P.aeruginosa, and S.aureus. Has insecticidal and hemolytic activities. Probably acts by disturbing membrane function with its amphipathic structure. This chain is Cupiennin-1b, found in Cupiennius salei (American wandering spider).